The sequence spans 734 residues: Monosaccharide-sensing protein 1 (734 aa).

6 helical membrane passes run 6–26, 44–64, 79–99, 102–122, 133–153, and 163–183; these read LVALAATIGNFLQGWDNATIA, GLVVAMSLIGATVITTCSGPI, VMYFVCGLIMLWSPNVYVLCF, LLNGFGAGLAVTLVPVYISET, TLPQFLGSGGMFLSYCMVFTM, and AMLGVLSIPSLLYLFLTVFYL. The segment at 351-403 is disordered; that stretch reads YNKDNDDYATDDGAGDDDDSDNDLRSPLMSRQTTSMDKDMIPHPTSGSTLSMR. Over residues 357–371 the composition is skewed to acidic residues; it reads DYATDDGAGDDDDSD. S446 and S480 each carry phosphoserine. The next 6 membrane-spanning stretches (helical) occupy residues 510–530, 556–576, 588–608, 621–641, 653–673, and 680–700; these read ALVVGVGIQILQQFSGINGVL, ASFLISGLTTLLMLPAIVVAM, LLWTIPVLIVSLVVLVISELI, GCVVLYFCFFVMGYGPIPNIL, LCIAICAMVFWIGDIIVTYSL, and IGLVGVFSIYAAVCVISWIFV.

Belongs to the major facilitator superfamily. Sugar transporter (TC 2.A.1.1) family. As to quaternary structure, binds to VIK at the tonoplast. In terms of processing, phosphorylated by VIK; this activation promotes carrier activity. As to expression, mostly expressed in juvenile and adult leaves, to a lower extent, in flower tissues, and, at low levels, in roots and stems.

Its subcellular location is the vacuole membrane. The catalysed reaction is D-glucose(out) + H(+)(in) = D-glucose(in) + H(+)(out). It catalyses the reaction sucrose(out) + H(+)(in) = sucrose(in) + H(+)(out). Enhanced activation by VIK-mediated phosphorylation promoting carrier activity and consequently vacuolar sugar accumulation. Sugar proton-coupled antiporter which contributes to vacuolar sugar import (e.g. monosaccharides including glucose, sucrose and fructose), particularly during stress responses (e.g. in response to cold). Required for cytosolic glucose homeostasis. The sequence is that of Monosaccharide-sensing protein 1 from Arabidopsis thaliana (Mouse-ear cress).